Consider the following 2059-residue polypeptide: DNA polymerase theta (2059 aa).

The tract at residues Asp25 to Val45 is disordered. Residues Gln30 to Val45 are compositionally biased toward polar residues. The 174-residue stretch at Pro243–Asn416 folds into the Helicase ATP-binding domain. An ATP-binding site is contributed by Ala256–Thr263. Residues Asp357 to His360 carry the DEAH box motif. Positions Cys464–Ile666 constitute a Helicase C-terminal domain. 4 disordered regions span residues Pro1052–Arg1073, Pro1168–Gly1190, Gln1204–Val1274, and Pro1330–Ser1372. The segment covering Glu1062–Asn1071 has biased composition (polar residues). Residues Lys1213 to Val1274 are compositionally biased toward polar residues. Positions Arg1355–Asn1365 are enriched in basic and acidic residues.

The protein belongs to the DNA polymerase type-A family. Requires Mg(2+) as cofactor. In terms of processing, in adult males, cleaved to produce a 100 kDa form. In terms of tissue distribution, expressed in ovaries (at protein level).

Its subcellular location is the nucleus. It catalyses the reaction DNA(n) + a 2'-deoxyribonucleoside 5'-triphosphate = DNA(n+1) + diphosphate. Resistant to aphidicolin, but sensitive to dideoxythymindine triphosphate (ddTTP) and N-ethyl malemide (NEM). In terms of biological role, multifunctional protein with both DNA polymerase and ATPase activities. Might have 3' to 5' exonuclease activity. Plays a role in different DNA repair pathways such as DNA strand cross-link repair and microhomology-mediated end-joining (MMEJ), an alternative non-homologous end-joining (NHEJ) machinery triggered in response to double-strand breaks. MMEJ is an error-prone repair pathway that produces deletions of sequences from the strand being repaired and promotes genomic rearrangements, such as telomere fusions. Utilizes short microhomologies present in partially and fully single-stranded DNA (ssDNA) as primers for DNA synthesis. Prefers poly(dA)/oligo(dT) as a template-primer. The ATPase activity is necessary during interstrand cross-link (ICL) repair and has a critical role in generating templated insertions during MMEJ. Necessary for processing DNA damage induced by oxygen and N-ethylation. In follicle cells, contributes to double-strand break repair at physiological rereplication forks necessary for survival of fertilized eggs. The sequence is that of DNA polymerase theta from Drosophila melanogaster (Fruit fly).